The following is a 365-amino-acid chain: Peptide chain release factor 2 (365 aa).

At Gln-251 the chain carries N5-methylglutamine.

Belongs to the prokaryotic/mitochondrial release factor family. Post-translationally, methylated by PrmC. Methylation increases the termination efficiency of RF2.

It localises to the cytoplasm. Peptide chain release factor 2 directs the termination of translation in response to the peptide chain termination codons UGA and UAA. This Campylobacter jejuni subsp. doylei (strain ATCC BAA-1458 / RM4099 / 269.97) protein is Peptide chain release factor 2.